Reading from the N-terminus, the 183-residue chain is Transcription factor E (183 aa).

The HTH TFE/IIEalpha-type domain maps to 4 to 97 (YIELVRRYVY…SWSIKDEDIR (94 aa)).

It belongs to the TFE family. Monomer. Interaction with RNA polymerase subunits RpoF and RpoE is necessary for Tfe stimulatory transcription activity. Able to interact with Tbp and RNA polymerase in the absence of DNA promoter. Interacts both with the preinitiation and elongation complexes.

Functionally, transcription factor that plays a role in the activation of archaeal genes transcribed by RNA polymerase. Facilitates transcription initiation by enhancing TATA-box recognition by TATA-box-binding protein (Tbp), and transcription factor B (Tfb) and RNA polymerase recruitment. Not absolutely required for transcription in vitro, but particularly important in cases where Tbp or Tfb function is not optimal. It dynamically alters the nucleic acid-binding properties of RNA polymerases by stabilizing the initiation complex and destabilizing elongation complexes. Seems to translocate with the RNA polymerase following initiation and acts by binding to the non template strand of the transcription bubble in elongation complexes. The sequence is that of Transcription factor E from Caldivirga maquilingensis (strain ATCC 700844 / DSM 13496 / JCM 10307 / IC-167).